Here is a 119-residue protein sequence, read N- to C-terminus: Holo-[acyl-carrier-protein] synthase (119 aa).

2 residues coordinate Mg(2+): D8 and E58.

The protein belongs to the P-Pant transferase superfamily. AcpS family. Mg(2+) is required as a cofactor.

It is found in the cytoplasm. It catalyses the reaction apo-[ACP] + CoA = holo-[ACP] + adenosine 3',5'-bisphosphate + H(+). In terms of biological role, transfers the 4'-phosphopantetheine moiety from coenzyme A to a Ser of acyl-carrier-protein. In Geobacillus sp. (strain WCH70), this protein is Holo-[acyl-carrier-protein] synthase.